Reading from the N-terminus, the 326-residue chain is Adenosine receptor A1 (326 aa).

The Extracellular portion of the chain corresponds to M1–A10. Residues A11–A33 form a helical membrane-spanning segment. Residues V34–C46 are Cytoplasmic-facing. A helical transmembrane segment spans residues F47–I69. The Extracellular segment spans residues N70 to C80. C80 and C169 form a disulfide bridge. A helical membrane pass occupies residues L81–A102. Over V103 to R123 the chain is Cytoplasmic. Residues A124–W146 traverse the membrane as a helical segment. The Extracellular segment spans residues N147–S176. N159 carries an N-linked (GlcNAc...) asparagine glycan. A helical transmembrane segment spans residues M177 to L201. The Cytoplasmic segment spans residues E202–S235. Residues L236–F259 form a helical membrane-spanning segment. Topologically, residues C260–S267 are extracellular. The chain crosses the membrane as a helical span at residues I268–I292. Residues Q293 to D326 lie on the Cytoplasmic side of the membrane. Residue C309 is the site of S-palmitoyl cysteine attachment.

Belongs to the G-protein coupled receptor 1 family.

It is found in the cell membrane. Receptor for adenosine. The activity of this receptor is mediated by G proteins which inhibit adenylyl cyclase. The polypeptide is Adenosine receptor A1 (ADORA1) (Homo sapiens (Human)).